A 189-amino-acid chain; its full sequence is 3-hydroxyanthranilate 3,4-dioxygenase (189 aa).

Arginine 49 is a binding site for O2. Fe cation contacts are provided by histidine 53, glutamate 59, and histidine 97. Glutamate 59 contacts substrate. Substrate contacts are provided by arginine 101 and glutamate 112. Fe cation is bound by residues cysteine 127, cysteine 130, cysteine 165, and cysteine 168.

This sequence belongs to the 3-HAO family. Homodimer. Fe(2+) serves as cofactor.

The catalysed reaction is 3-hydroxyanthranilate + O2 = (2Z,4Z)-2-amino-3-carboxymuconate 6-semialdehyde. Its pathway is cofactor biosynthesis; NAD(+) biosynthesis; quinolinate from L-kynurenine: step 3/3. Catalyzes the oxidative ring opening of 3-hydroxyanthranilate to 2-amino-3-carboxymuconate semialdehyde, which spontaneously cyclizes to quinolinate. This chain is 3-hydroxyanthranilate 3,4-dioxygenase, found in Cupriavidus pinatubonensis (strain JMP 134 / LMG 1197) (Cupriavidus necator (strain JMP 134)).